Here is a 500-residue protein sequence, read N- to C-terminus: Probable cytosol aminopeptidase (500 aa).

2 residues coordinate Mn(2+): Lys-262 and Asp-267. The active site involves Lys-274. 3 residues coordinate Mn(2+): Asp-285, Asp-344, and Glu-346. The active site involves Arg-348.

Belongs to the peptidase M17 family. The cofactor is Mn(2+).

The protein localises to the cytoplasm. The catalysed reaction is Release of an N-terminal amino acid, Xaa-|-Yaa-, in which Xaa is preferably Leu, but may be other amino acids including Pro although not Arg or Lys, and Yaa may be Pro. Amino acid amides and methyl esters are also readily hydrolyzed, but rates on arylamides are exceedingly low.. The enzyme catalyses Release of an N-terminal amino acid, preferentially leucine, but not glutamic or aspartic acids.. In terms of biological role, presumably involved in the processing and regular turnover of intracellular proteins. Catalyzes the removal of unsubstituted N-terminal amino acids from various peptides. In Ehrlichia ruminantium (strain Gardel), this protein is Probable cytosol aminopeptidase.